A 448-amino-acid polypeptide reads, in one-letter code: Probable glycine dehydrogenase (decarboxylating) subunit 1 (448 aa).

Belongs to the GcvP family. N-terminal subunit subfamily. In terms of assembly, the glycine cleavage system is composed of four proteins: P, T, L and H. In this organism, the P 'protein' is a heterodimer of two subunits.

The catalysed reaction is N(6)-[(R)-lipoyl]-L-lysyl-[glycine-cleavage complex H protein] + glycine + H(+) = N(6)-[(R)-S(8)-aminomethyldihydrolipoyl]-L-lysyl-[glycine-cleavage complex H protein] + CO2. Its function is as follows. The glycine cleavage system catalyzes the degradation of glycine. The P protein binds the alpha-amino group of glycine through its pyridoxal phosphate cofactor; CO(2) is released and the remaining methylamine moiety is then transferred to the lipoamide cofactor of the H protein. This Exiguobacterium sibiricum (strain DSM 17290 / CCUG 55495 / CIP 109462 / JCM 13490 / 255-15) protein is Probable glycine dehydrogenase (decarboxylating) subunit 1.